The sequence spans 635 residues: Threonine--tRNA ligase (635 aa).

Positions 1–61 constitute a TGS domain; sequence MINISFPDGS…EHDCKLRILT (61 aa). The catalytic stretch occupies residues 242–533; the sequence is DHRKIGKELD…LIEEYAGKFP (292 aa). 3 residues coordinate Zn(2+): C333, H384, and H510.

It belongs to the class-II aminoacyl-tRNA synthetase family. In terms of assembly, homodimer. Zn(2+) is required as a cofactor.

Its subcellular location is the cytoplasm. It carries out the reaction tRNA(Thr) + L-threonine + ATP = L-threonyl-tRNA(Thr) + AMP + diphosphate + H(+). Catalyzes the attachment of threonine to tRNA(Thr) in a two-step reaction: L-threonine is first activated by ATP to form Thr-AMP and then transferred to the acceptor end of tRNA(Thr). Also edits incorrectly charged L-seryl-tRNA(Thr). This chain is Threonine--tRNA ligase, found in Rickettsia typhi (strain ATCC VR-144 / Wilmington).